Here is a 92-residue protein sequence, read N- to C-terminus: Small ribosomal subunit protein uS19 (92 aa).

This sequence belongs to the universal ribosomal protein uS19 family.

Its function is as follows. Protein S19 forms a complex with S13 that binds strongly to the 16S ribosomal RNA. The protein is Small ribosomal subunit protein uS19 of Neisseria gonorrhoeae (strain ATCC 700825 / FA 1090).